The chain runs to 320 residues: tRNA U34 carboxymethyltransferase (320 aa).

Carboxy-S-adenosyl-L-methionine-binding positions include Lys-89, Trp-103, Lys-108, Gly-127, 177 to 178, Met-193, Tyr-197, and Arg-312; that span reads LE.

It belongs to the class I-like SAM-binding methyltransferase superfamily. CmoB family. As to quaternary structure, homotetramer.

It catalyses the reaction carboxy-S-adenosyl-L-methionine + 5-hydroxyuridine(34) in tRNA = 5-carboxymethoxyuridine(34) in tRNA + S-adenosyl-L-homocysteine + H(+). Functionally, catalyzes carboxymethyl transfer from carboxy-S-adenosyl-L-methionine (Cx-SAM) to 5-hydroxyuridine (ho5U) to form 5-carboxymethoxyuridine (cmo5U) at position 34 in tRNAs. In Stutzerimonas stutzeri (strain A1501) (Pseudomonas stutzeri), this protein is tRNA U34 carboxymethyltransferase.